Reading from the N-terminus, the 458-residue chain is ATP synthase subunit beta (458 aa).

148-155 (GGAGVGKT) lines the ATP pocket.

The protein belongs to the ATPase alpha/beta chains family. F-type ATPases have 2 components, CF(1) - the catalytic core - and CF(0) - the membrane proton channel. CF(1) has five subunits: alpha(3), beta(3), gamma(1), delta(1), epsilon(1). CF(0) has three main subunits: a(1), b(2) and c(9-12). The alpha and beta chains form an alternating ring which encloses part of the gamma chain. CF(1) is attached to CF(0) by a central stalk formed by the gamma and epsilon chains, while a peripheral stalk is formed by the delta and b chains.

It is found in the cell inner membrane. The enzyme catalyses ATP + H2O + 4 H(+)(in) = ADP + phosphate + 5 H(+)(out). Functionally, produces ATP from ADP in the presence of a proton gradient across the membrane. The catalytic sites are hosted primarily by the beta subunits. In Pseudomonas fluorescens (strain ATCC BAA-477 / NRRL B-23932 / Pf-5), this protein is ATP synthase subunit beta.